A 324-amino-acid chain; its full sequence is Protein GET4 (324 aa).

The protein belongs to the GET4 family. Interacts with GET3A.

It is found in the cytoplasm. Its subcellular location is the cytosol. In terms of biological role, involved in the regulation of root hair growth. In Arabidopsis thaliana (Mouse-ear cress), this protein is Protein GET4.